The chain runs to 1755 residues: Transposon Ty1-JR1 Gag-Pol polyprotein (1755 aa).

Residues 1–16 (MESQQLSQHSHISHGS) show a composition bias toward low complexity. Disordered stretches follow at residues 1-93 (MESQ…MMTQ), 126-173 (PQSQ…RPPP), and 352-421 (GSRN…SKST). Composition is skewed to polar residues over residues 48 to 60 (TKAN…TPAS) and 127 to 152 (QSQF…GNTF). Low complexity predominate over residues 153-165 (TDSSSADSDMTST). An RNA-binding region spans residues 299 to 401 (NNGIHINNKV…NSKSKTARAH (103 aa)). Residues 402–418 (NVSTSNNSPSTDNDSIS) are compositionally biased toward low complexity. S416 carries the phosphoserine modification. Catalysis depends on D461, which acts as the For protease activity; shared with dimeric partner. Positions 583–640 (NVHTSESTRKYPYPFIHRMLAHANAQTIRYSLKNNTITYFNESDVDWSSAIDYQCPDC) are integrase-type zinc finger-like. One can recognise an Integrase catalytic domain in the interval 660–835 (NSYEPFQYLH…AGLDISTLLP (176 aa)). 2 residues coordinate Mg(2+): D671 and D736. Disordered stretches follow at residues 956–1087 (SKAV…ETEK), 1092–1111 (RSPS…NIVP), and 1130–1186 (DLPL…EDNE). Low complexity predominate over residues 960–969 (SPTDSTPPST). A compositionally biased stretch (polar residues) spans 1005–1015 (STPQISNIEST). The span at 1038–1053 (ESSHASKSKDFRHSDS) shows a compositional bias: basic and acidic residues. Composition is skewed to polar residues over residues 1054–1082 (YSEN…QISD) and 1101–1111 (PENNSSHNIVP). Residues 1178 to 1212 (KKRSLEDNETEIKVSRDTWNTKNMRSLEPPRSKKR) carry the Bipartite nuclear localization signal motif. Residues 1338–1476 (NNYYITQLDI…DILGLEIKYQ (139 aa)) form the Reverse transcriptase Ty1/copia-type domain. The Mg(2+) site is built by D1346, D1427, D1428, D1610, E1652, and D1685. In terms of domain architecture, RNase H Ty1/copia-type spans 1610-1752 (DASYGNQPYY…IKTFKLLTNK (143 aa)).

In terms of assembly, the capsid protein forms a homotrimer, from which the VLPs are assembled. The protease is a homodimer, whose active site consists of two apposed aspartic acid residues. In terms of processing, initially, virus-like particles (VLPs) are composed of the structural unprocessed proteins Gag and Gag-Pol, and also contain the host initiator methionine tRNA (tRNA(i)-Met) which serves as a primer for minus-strand DNA synthesis, and a dimer of genomic Ty RNA. Processing of the polyproteins occurs within the particle and proceeds by an ordered pathway, called maturation. First, the protease (PR) is released by autocatalytic cleavage of the Gag-Pol polyprotein yielding capsid protein p45 and a Pol-p154 precursor protein. This cleavage is a prerequisite for subsequent processing of Pol-p154 at the remaining sites to release the mature structural and catalytic proteins. Maturation takes place prior to the RT reaction and is required to produce transposition-competent VLPs.

The protein resides in the cytoplasm. It is found in the nucleus. The enzyme catalyses DNA(n) + a 2'-deoxyribonucleoside 5'-triphosphate = DNA(n+1) + diphosphate. It catalyses the reaction Endonucleolytic cleavage to 5'-phosphomonoester.. Functionally, capsid protein (CA) is the structural component of the virus-like particle (VLP), forming the shell that encapsulates the retrotransposons dimeric RNA genome. The particles are assembled from trimer-clustered units and there are holes in the capsid shells that allow for the diffusion of macromolecules. CA also has nucleocapsid-like chaperone activity, promoting primer tRNA(i)-Met annealing to the multipartite primer-binding site (PBS), dimerization of Ty1 RNA and initiation of reverse transcription. In terms of biological role, the aspartyl protease (PR) mediates the proteolytic cleavages of the Gag and Gag-Pol polyproteins after assembly of the VLP. Its function is as follows. Reverse transcriptase/ribonuclease H (RT) is a multifunctional enzyme that catalyzes the conversion of the retro-elements RNA genome into dsDNA within the VLP. The enzyme displays a DNA polymerase activity that can copy either DNA or RNA templates, and a ribonuclease H (RNase H) activity that cleaves the RNA strand of RNA-DNA heteroduplexes during plus-strand synthesis and hydrolyzes RNA primers. The conversion leads to a linear dsDNA copy of the retrotransposon that includes long terminal repeats (LTRs) at both ends. Integrase (IN) targets the VLP to the nucleus, where a subparticle preintegration complex (PIC) containing at least integrase and the newly synthesized dsDNA copy of the retrotransposon must transit the nuclear membrane. Once in the nucleus, integrase performs the integration of the dsDNA into the host genome. The chain is Transposon Ty1-JR1 Gag-Pol polyprotein (TY1B-JR1) from Saccharomyces cerevisiae (strain ATCC 204508 / S288c) (Baker's yeast).